Consider the following 185-residue polypeptide: ATP synthase subunit delta (185 aa).

The protein belongs to the ATPase delta chain family. In terms of assembly, F-type ATPases have 2 components, F(1) - the catalytic core - and F(0) - the membrane proton channel. F(1) has five subunits: alpha(3), beta(3), gamma(1), delta(1), epsilon(1). F(0) has three main subunits: a(1), b(2) and c(10-14). The alpha and beta chains form an alternating ring which encloses part of the gamma chain. F(1) is attached to F(0) by a central stalk formed by the gamma and epsilon chains, while a peripheral stalk is formed by the delta and b chains.

It is found in the cell inner membrane. In terms of biological role, f(1)F(0) ATP synthase produces ATP from ADP in the presence of a proton or sodium gradient. F-type ATPases consist of two structural domains, F(1) containing the extramembraneous catalytic core and F(0) containing the membrane proton channel, linked together by a central stalk and a peripheral stalk. During catalysis, ATP synthesis in the catalytic domain of F(1) is coupled via a rotary mechanism of the central stalk subunits to proton translocation. This protein is part of the stalk that links CF(0) to CF(1). It either transmits conformational changes from CF(0) to CF(1) or is implicated in proton conduction. This is ATP synthase subunit delta from Gemmatimonas aurantiaca (strain DSM 14586 / JCM 11422 / NBRC 100505 / T-27).